A 31-amino-acid chain; its full sequence is GIPCGESCVFIPCTVTALLGCSCKDKVCYKN.

The segment at residues 1–31 is a cross-link (cyclopeptide (Gly-Asn)); it reads GIPCGESCVFIPCTVTALLGCSCKDKVCYKN. 3 disulfide bridges follow: C4–C21, C8–C23, and C13–C28.

Post-translationally, this is a cyclic peptide.

It is found in the secreted. Probably participates in a plant defense mechanism. The polypeptide is Cyclotide cter-R (Clitoria ternatea (Butterfly pea)).